We begin with the raw amino-acid sequence, 456 residues long: tRNA(Ile)-lysidine synthase (456 aa).

28 to 33 serves as a coordination point for ATP; that stretch reads SGGSDS.

Belongs to the tRNA(Ile)-lysidine synthase family.

The protein resides in the cytoplasm. It catalyses the reaction cytidine(34) in tRNA(Ile2) + L-lysine + ATP = lysidine(34) in tRNA(Ile2) + AMP + diphosphate + H(+). Its function is as follows. Ligates lysine onto the cytidine present at position 34 of the AUA codon-specific tRNA(Ile) that contains the anticodon CAU, in an ATP-dependent manner. Cytidine is converted to lysidine, thus changing the amino acid specificity of the tRNA from methionine to isoleucine. In Brucella anthropi (strain ATCC 49188 / DSM 6882 / CCUG 24695 / JCM 21032 / LMG 3331 / NBRC 15819 / NCTC 12168 / Alc 37) (Ochrobactrum anthropi), this protein is tRNA(Ile)-lysidine synthase.